Reading from the N-terminus, the 78-residue chain is Large ribosomal subunit protein bL28 (78 aa).

Belongs to the bacterial ribosomal protein bL28 family.

This is Large ribosomal subunit protein bL28 from Edwardsiella ictaluri (strain 93-146).